We begin with the raw amino-acid sequence, 340 residues long: MGGRVSVELPKRDPPPGVPTDEMLLNVDKMHDVIAPAKLLEYVHIGPLAKDKEDKVKKRYPEFRLVNTGPGGLSALLRQSYNGTAPNCCRTFNRTHYWKKDGKISDKYEEGAVLESCWPDVHDTGKCDVDLFDWCQGDTFDRNICHQWIGSAFNRSDRTVEGQQSLINLYNKMQTLCSKDASVPICESFLHHLRAHNTEDSKEMIDYILRQQSADFKQKYMRCSYPTRDKLEESLKYAEPRECWDPECSNANVNFLLTRNYNNLGLCNIVRCNTSVNNLQMDKTSSLRLSCGLSNSDRFSTVPVNRAKVVQHNIKHSFDLKLHLISLLSLLVIWILIVAI.

G2 carries the N-myristoyl glycine; by host lipid modification. Residues 2–319 (GGRVSVELPK…VQHNIKHSFD (318 aa)) are Virion surface-facing. The helical; Signal-anchor for type II membrane protein transmembrane segment at 320-340 (LKLHLISLLSLLVIWILIVAI) threads the bilayer.

Belongs to the orthopoxvirus OPG086 family. In terms of assembly, interacts with OPG143. Component of the entry fusion complex (EFC) composed of OPG053, OPG076, OPG086, OPG094, OPG095, OPG099, OPG107, OPG143, OPG104, OPG147 and OPG155. Except for OPG095 and OPG053, each of the EFC proteins is required for assembly or stability of the complex. In terms of processing, unglycosylated because produced in viral factories instead of the classic ER -Golgi route.

It localises to the virion membrane. Its function is as follows. Component of the entry fusion complex (EFC), which consists of 11 proteins. During cell infection, this complex mediates entry of the virion core into the host cytoplasm by a two-step mechanism consisting of lipid mixing of the viral and cellular membranes and subsequent pore formation. The chain is Entry-fusion complex protein OPG094 (OPG094) from Homo sapiens (Human).